A 222-amino-acid chain; its full sequence is Protein-L-isoaspartate O-methyltransferase (222 aa).

Serine 65 is a catalytic residue.

This sequence belongs to the methyltransferase superfamily. L-isoaspartyl/D-aspartyl protein methyltransferase family.

Its subcellular location is the cytoplasm. The catalysed reaction is [protein]-L-isoaspartate + S-adenosyl-L-methionine = [protein]-L-isoaspartate alpha-methyl ester + S-adenosyl-L-homocysteine. In terms of biological role, catalyzes the methyl esterification of L-isoaspartyl residues in peptides and proteins that result from spontaneous decomposition of normal L-aspartyl and L-asparaginyl residues. It plays a role in the repair and/or degradation of damaged proteins. The sequence is that of Protein-L-isoaspartate O-methyltransferase from Chlorobium luteolum (strain DSM 273 / BCRC 81028 / 2530) (Pelodictyon luteolum).